The following is a 357-amino-acid chain: Dehydrogenase FUB6 (357 aa).

It belongs to the zinc-containing alcohol dehydrogenase family. Quinone oxidoreductase subfamily.

Its pathway is mycotoxin biosynthesis. Functionally, dehydrogenase; part of the gene cluster that mediates the biosynthesis of fusaric acid, a mycotoxin with low to moderate toxicity to animals and humans, but with high phytotoxic properties. L-aspartate is suggested as fusaric acid amino acid precursor that is activated and further processed to O-acetyl-L-homoserine by cluster enzymes aspartate kinase FUB3 and homoserine O-acetyltransferase FUB5, as well as enzymes of the primary metabolism. The polyketide synthase (PKS) FUB1 generates the triketide trans-2-hexenal which is presumptively released by the hydrolase FUB4 and linked to the NRPS-bound amino acid precursor by NAD(P)-dependent dehydrogenase FUB6. FUB1, FUB4, and the non-canonical NRPS Fub8 may form an enzyme complex. Further processing of the NRPS-bound intermediate might be carried out by FUB6 and the O-acetylhomoserine FUB7, enabling a spontaneous electrocyclization to close the carbon backbone of fusaric acid. Dihydrofusaric acid is likely to be released via reduction by the thioester reductase (TR) domain of FUB8 whereupon the final oxidation to fusaric acid may (also) be performed by the FMN-dependent dehydrogenase FUB9. This chain is Dehydrogenase FUB6, found in Gibberella moniliformis (strain M3125 / FGSC 7600) (Maize ear and stalk rot fungus).